The sequence spans 164 residues: Thiol peroxidase (164 aa).

In terms of domain architecture, Thioredoxin spans 16–162 (LQVGDIAKDF…YEAAINAAKI (147 aa)). Cysteine 58 serves as the catalytic Cysteine sulfenic acid (-SOH) intermediate. Cysteine 58 and cysteine 92 are oxidised to a cystine.

It belongs to the peroxiredoxin family. Tpx subfamily. Homodimer.

It catalyses the reaction a hydroperoxide + [thioredoxin]-dithiol = an alcohol + [thioredoxin]-disulfide + H2O. Functionally, thiol-specific peroxidase that catalyzes the reduction of hydrogen peroxide and organic hydroperoxides to water and alcohols, respectively. Plays a role in cell protection against oxidative stress by detoxifying peroxides. The polypeptide is Thiol peroxidase (Streptococcus agalactiae serotype V (strain ATCC BAA-611 / 2603 V/R)).